Here is a 989-residue protein sequence, read N- to C-terminus: MKPDRDAAEEFFEYDAEEFLVFLTLLITEGRTPECSVKGRTEGVHCPPAQSAMPVLTKHECSDKIPQCRQARRTRSEVMLLWRNHIPIMIEVMLLPDCCYSDEGPTTDCTDLNDPAIKQDALLLERWTLQPVPRQSGDRFIEEKTLLLAVRSYVFFSQLSAWLSASHGIVPRNILYRISAADEELIWNFSQTPSEHAFPVPNVSHSVALKVRVQSLPRQPRYPVLKCSIHSGLAFLGKRALEHGEGGNQAGDNRSSLRLPRSPLFSRSLHPSPPSHSPLNTRKCPPRPESPLPPGKAVKWLYSRLNGGIDTPPSEPYSLCTNGAESPKTSRTESPIRGFKSLSITDPLVIPSPSSISGETNPLIGSLLQERQEVIARIAQRLNFCDPTAPHLPDALFTSQEPPGHKTTWNSTQDKECLKKSKDSLFSVPHPQNHNGNSLEIPERSRSSLFDTPLSPRTRTRLDRVDRESKTSPKPATCRRLVLSDQSAEGSLIADAVQDISRLIQERLQHSYSLLNGTYKLKTSQNEQVGSNHGAQTNGFVSLSSHKKPTNAPNGEESTDPHISHATKCCRSPDSSRRKPDCSPRPLKVASLKLEDHSVTKSQPLTASNHQHYVSRESWTSLKNNSSHASSPQENGLTQIGYHQPFKNRVAISEKEAEKHVRDGSTCLEKDENQEPHSSLSSTPANLTCNISSLAPTESNQTSCGNWKKQTRHSIDGTATKAFHPCTGLPLLSSPVPQRKSQTGYFDLDTSLIHCRGVPWAANRRVLKRSQDYDESQHQILSASAPPANLSLLGNFEECVLNYRLEPLGTVEGFTAEVGASGTFCPSHMTLPVDVSFYSVSDDNAPSPYMGVINLESLGKRGYRVPPSGTIQVTLFNPNKTVVKMFVVMYDLRDMPASHQTFLRQRTFSVPVKREFNGQSNKKTSLGQGRTLRYLVHLRFQSSKSGKIYLHRDIRLLFSRKSMEVDSGAAYELKSFTELPADPPFSPRC.

The transactivation domain 1 (TAD1) stretch occupies residues 24–32 (TLLITEGRT). 4 disordered regions span residues 244–295 (GEGG…LPPG), 393–477 (PDAL…KPAT), 525–639 (QNEQ…GLTQ), and 656–686 (EAEK…TPAN). The segment covering 254–270 (RSSLRLPRSPLFSRSLH) has biased composition (low complexity). Residues 397–412 (FTSQEPPGHKTTWNST) show a composition bias toward polar residues. Composition is skewed to basic and acidic residues over residues 413–423 (QDKECLKKSKD) and 460–471 (TRLDRVDRESKT). Composition is skewed to polar residues over residues 525–544 (QNEQ…VSLS) and 600–638 (TKSQ…NGLT). The segment covering 656–675 (EAEKHVRDGSTCLEKDENQE) has biased composition (basic and acidic residues). A compositionally biased stretch (polar residues) spans 676–686 (PHSSLSSTPAN). The interval 792–849 (LLGNFEECVLNYRLEPLGTVEGFTAEVGASGTFCPSHMTLPVDVSFYSVSDDNAPSPY) is required for macropage invasion. The tract at residues 876–884 (FNPNKTVVK) is transactivation domain 2 (TAD2).

This sequence belongs to the ATOS family.

It is found in the nucleus. In terms of biological role, transcription regulator that syncronizes transcriptional and translational programs to promote macrophage invasion of tissues. This Danio rerio (Zebrafish) protein is Atos homolog protein A (atosa).